A 345-amino-acid polypeptide reads, in one-letter code: N-acetyl-gamma-glutamyl-phosphate reductase (345 aa).

Cys-149 is an active-site residue.

Belongs to the NAGSA dehydrogenase family. Type 1 subfamily.

It is found in the cytoplasm. The enzyme catalyses N-acetyl-L-glutamate 5-semialdehyde + phosphate + NADP(+) = N-acetyl-L-glutamyl 5-phosphate + NADPH + H(+). The protein operates within amino-acid biosynthesis; L-arginine biosynthesis; N(2)-acetyl-L-ornithine from L-glutamate: step 3/4. In terms of biological role, catalyzes the NADPH-dependent reduction of N-acetyl-5-glutamyl phosphate to yield N-acetyl-L-glutamate 5-semialdehyde. This Bacillus cereus (strain B4264) protein is N-acetyl-gamma-glutamyl-phosphate reductase.